The chain runs to 274 residues: Peroxiredoxin-4 (274 aa).

The N-terminal stretch at 1-40 (MEAPPPPPPLPATTLAPGRSRKLLLLPLLLFLLRAEAVRG) is a signal peptide. Residues 82–240 (AKISKPAPYW…TLRLVQAFQY (159 aa)) enclose the Thioredoxin domain. Residue Cys127 is the Cysteine sulfenic acid (-SOH) intermediate of the active site.

This sequence belongs to the peroxiredoxin family. AhpC/Prx1 subfamily. As to quaternary structure, homodimer; disulfide-linked, upon oxidation. 5 homodimers assemble to form a ring-like decamer. In terms of processing, the enzyme can be inactivated by further oxidation of the cysteine sulfenic acid (C(P)-SOH) to sulphinic acid (C(P)-SO2H) and sulphonic acid (C(P)-SO3H) instead of its condensation to a disulfide bond.

Its subcellular location is the cytoplasm. It is found in the endoplasmic reticulum. The catalysed reaction is a hydroperoxide + [thioredoxin]-dithiol = an alcohol + [thioredoxin]-disulfide + H2O. Functionally, thiol-specific peroxidase that catalyzes the reduction of hydrogen peroxide and organic hydroperoxides to water and alcohols, respectively. Plays a role in cell protection against oxidative stress by detoxifying peroxides and as sensor of hydrogen peroxide-mediated signaling events. Regulates the activation of NF-kappa-B in the cytosol by a modulation of I-kappa-B-alpha phosphorylation. In Bos taurus (Bovine), this protein is Peroxiredoxin-4 (PRDX4).